Here is a 195-residue protein sequence, read N- to C-terminus: Peptide deformylase (195 aa).

Positions 102 and 144 each coordinate Fe cation. Glu145 is a catalytic residue. His148 is a binding site for Fe cation.

It belongs to the polypeptide deformylase family. The cofactor is Fe(2+).

It catalyses the reaction N-terminal N-formyl-L-methionyl-[peptide] + H2O = N-terminal L-methionyl-[peptide] + formate. Its function is as follows. Removes the formyl group from the N-terminal Met of newly synthesized proteins. Requires at least a dipeptide for an efficient rate of reaction. N-terminal L-methionine is a prerequisite for activity but the enzyme has broad specificity at other positions. The chain is Peptide deformylase from Salinibacter ruber (strain DSM 13855 / M31).